The sequence spans 182 residues: Acireductone dioxygenase (182 aa).

4 residues coordinate Fe(2+): H100, H102, E106, and H145. The Ni(2+) site is built by H100, H102, E106, and H145.

It belongs to the acireductone dioxygenase (ARD) family. In terms of assembly, monomer. The cofactor is Fe(2+). Ni(2+) serves as cofactor.

It catalyses the reaction 1,2-dihydroxy-5-(methylsulfanyl)pent-1-en-3-one + O2 = 3-(methylsulfanyl)propanoate + CO + formate + 2 H(+). The catalysed reaction is 1,2-dihydroxy-5-(methylsulfanyl)pent-1-en-3-one + O2 = 4-methylsulfanyl-2-oxobutanoate + formate + 2 H(+). Its pathway is amino-acid biosynthesis; L-methionine biosynthesis via salvage pathway; L-methionine from S-methyl-5-thio-alpha-D-ribose 1-phosphate: step 5/6. Catalyzes 2 different reactions between oxygen and the acireductone 1,2-dihydroxy-3-keto-5-methylthiopentene (DHK-MTPene) depending upon the metal bound in the active site. Fe-containing acireductone dioxygenase (Fe-ARD) produces formate and 2-keto-4-methylthiobutyrate (KMTB), the alpha-ketoacid precursor of methionine in the methionine recycle pathway. Ni-containing acireductone dioxygenase (Ni-ARD) produces methylthiopropionate, carbon monoxide and formate, and does not lie on the methionine recycle pathway. The protein is Acireductone dioxygenase of Nostoc sp. (strain PCC 7120 / SAG 25.82 / UTEX 2576).